Reading from the N-terminus, the 287-residue chain is Protoheme IX farnesyltransferase (287 aa).

Transmembrane regions (helical) follow at residues 19-39 (LMVAGATFFGAMLAVPHVTIT), 100-120 (MVLCLAGGLTSLLVGIGIVAV), 134-154 (FALLVGAAAGAMPPVVGWLAV), 162-182 (MLVVVYTLYLLWQIPHFWLHA), 212-232 (VWFHAYAVAVLMVPAFPLLEG), 233-253 (VGMRIMVTLCGIALLFAAMLA), and 267-287 (VLCAVMVVLLIDRLAIPVSLF).

This sequence belongs to the UbiA prenyltransferase family. Protoheme IX farnesyltransferase subfamily.

It localises to the cell inner membrane. The enzyme catalyses heme b + (2E,6E)-farnesyl diphosphate + H2O = Fe(II)-heme o + diphosphate. The protein operates within porphyrin-containing compound metabolism; heme O biosynthesis; heme O from protoheme: step 1/1. Functionally, converts heme B (protoheme IX) to heme O by substitution of the vinyl group on carbon 2 of heme B porphyrin ring with a hydroxyethyl farnesyl side group. The sequence is that of Protoheme IX farnesyltransferase from Nitratidesulfovibrio vulgaris (strain DP4) (Desulfovibrio vulgaris).